The primary structure comprises 63 residues: Small ribosomal subunit protein eS31 (63 aa).

Residues cysteine 31, cysteine 34, cysteine 50, and cysteine 53 each contribute to the Zn(2+) site.

The protein belongs to the eukaryotic ribosomal protein eS31 family. Part of the 30S ribosomal subunit. The cofactor is Zn(2+).

The protein is Small ribosomal subunit protein eS31 (rps27ae) of Aeropyrum pernix (strain ATCC 700893 / DSM 11879 / JCM 9820 / NBRC 100138 / K1).